A 645-amino-acid polypeptide reads, in one-letter code: Serine/threonine-protein kinase Nek11 (645 aa).

The Protein kinase domain occupies 29–287 (YVLQQKLGSG…AIEILKIPYL (259 aa)). ATP contacts are provided by residues 35–43 (LGSGSFGTV) and K61. D158 serves as the catalytic Proton acceptor. S273 is subject to Phosphoserine; by CHEK1. Residues 346–385 (RLRKLQAADEKARKLKKIVEEKYEENSKRMQELRSRNFQQ) adopt a coiled-coil conformation. The disordered stretch occupies residues 399-445 (GMEEKEEQPEGRLSCSPQDEDEERWQGREEESDEPTLENLPESQPIP).

It belongs to the protein kinase superfamily. NEK Ser/Thr protein kinase family. NIMA subfamily. In terms of assembly, interacts with isoform 1 of NEK2. The cofactor is Mn(2+). Mg(2+) is required as a cofactor. Post-translationally, phosphorylated by NEK2. Phosphorylation at Ser-273 is important for its activation. In terms of tissue distribution, poorly expressed in cerebellum, trachea, lung, appendix, and uterus.

Its subcellular location is the nucleus. The protein localises to the nucleolus. The catalysed reaction is L-seryl-[protein] + ATP = O-phospho-L-seryl-[protein] + ADP + H(+). It catalyses the reaction L-threonyl-[protein] + ATP = O-phospho-L-threonyl-[protein] + ADP + H(+). Its activity is regulated as follows. Autorepressed by intramolecular binding of the C-terminus which dissociates following phosphorylation by NEK2 isoform 1 in G1/S-arrested cells. NEK2 isoform 2 is largely not present in the nucleolus, and does not appear to phosphorylate NEK11. Activated in response to DNA damage. Inhibited by zinc. Its function is as follows. Protein kinase which plays an important role in the G2/M checkpoint response to DNA damage. Controls degradation of CDC25A by directly phosphorylating it on residues whose phosphorylation is required for BTRC-mediated polyubiquitination and degradation. This chain is Serine/threonine-protein kinase Nek11, found in Homo sapiens (Human).